The sequence spans 169 residues: Probable actin-related protein 2/3 complex subunit 4 (169 aa).

This sequence belongs to the ARPC4 family. As to quaternary structure, component of the Arp2/3 complex, at least composed of arx-1, arx-2, arx-4 and arx-6.

It is found in the cytoplasm. Its subcellular location is the cytoskeleton. In terms of biological role, functions as actin-binding component of the Arp2/3 complex which is involved in regulation of actin polymerization and together with an activating nucleation-promoting factor (NPF) mediates the formation of branched actin networks. Seems to contact the mother actin filament. Plays a role in time-dependent memory loss and the retention of conditioned behavior over time. This is Probable actin-related protein 2/3 complex subunit 4 from Caenorhabditis elegans.